The chain runs to 824 residues: RelA-associated inhibitor (824 aa).

M1 bears the N-acetylmethionine mark. 2 disordered regions span residues 48-87 (SLWSDSPAPPGAQAGVPSRMARYSTSPVPEHFGSRGSPQK) and 99-271 (RSES…YERL). Phosphoserine is present on residues S84, S100, S102, S110, S113, S119, and S120. Residue T123 is modified to Phosphothreonine. Position 134 is a phosphoserine (S134). Omega-N-methylarginine is present on residues R137, R142, R144, R160, R167, and R180. 3 positions are modified to phosphoserine: S183, S187, and S203. An Omega-N-methylarginine modification is found at R205. T275 is modified (phosphothreonine). The residue at position 279 (S279) is a Phosphoserine. Disordered stretches follow at residues 291–370 (SLDG…RPIP) and 388–501 (RAVL…QTVP). A Phosphothreonine modification is found at T307. S315, S331, and S338 each carry phosphoserine. Phosphothreonine is present on T340. Positions 359–370 (QPRSTPRQRPIP) are enriched in low complexity. Residues 400-424 (APPPKLPPQPPPQPQMQPQPQPQPQ) show a composition bias toward pro residues. A compositionally biased stretch (low complexity) spans 425–440 (MQPQSQAQPQTPAPQQ). Phosphoserine is present on residues S522, S563, and S593. Positions 547–614 (FHRHGGPGPG…SVLRKVGSPR (68 aa)) are disordered. The span at 575 to 597 (PPAPAPPAPIPPPAPPQSSPPEQ) shows a compositional bias: pro residues. ANK repeat units follow at residues 655-684 (EGITALHNAICGANYPIVDFLIAAGANVNS) and 688-717 (HGWTPLHCAASCNDTAICTALVQHGAAIFA). Positions 754 to 816 (MHNGVVYALW…PRNYFGLFPR (63 aa)) constitute an SH3 domain.

The protein belongs to the iASPP family. In terms of assembly, interacts with TP63 and TP73. Interacts with RELA NF-kappa-B subunit and with SP1 via its C-terminal part. Interacts (via SH3 domain and ANK repeats) with p53/TP53; the interaction inhibits pro-apoptotic activity of p53/TP53. As to expression, most abundant in skin with high levels also found in heart, testis and stomach. In 15.5 dpc embryonic heart, expressed at higher levels in atria than ventricles.

The protein localises to the cytoplasm. The protein resides in the nucleus. Functionally, regulator that plays a central role in regulation of apoptosis and transcription via its interaction with NF-kappa-B and p53/TP53 proteins. Inhibits p53/TP53 function, possibly by preventing the association between p53/TP53 and ASPP1 or ASPP2, and therefore suppressing the subsequent activation of apoptosis. Is involved in NF-kappa-B dependent negative regulation of inflammatory response. This is RelA-associated inhibitor from Mus musculus (Mouse).